The sequence spans 208 residues: Ras-related protein Rab-6A (208 aa).

At S2 the chain carries N-acetylserine. Residues S23, V24, G25, K26, T27, S28, D39, N40, Y42, and T45 each coordinate GTP. T27 provides a ligand contact to Mg(2+). Positions 32 to 50 (RFMYDSFDNTYQATIGIDF) match the Switch 1 motif. Residues T45 and D68 each contribute to the Mg(2+) site. A Switch 2 motif is present at residues 69 to 88 (TAGQERFRSLIPSYIRDSTV). Residues G71, N126, K127, D129, S156, A157, and K158 each contribute to the GTP site. The residue at position 184 (S184) is a Phosphoserine. 2 S-geranylgeranyl cysteine lipidation sites follow: C206 and C208. C208 carries the cysteine methyl ester modification.

It belongs to the small GTPase superfamily. Rab family. In terms of assembly, interacts with BICDL1; leads to its accumulation in the pericentrosomal region. Interacts with SCYL1BP1. Interacts with VSP52. Interacts with RABGAP1. Interacts with GCC2 (via its GRIP domain). Interacts with RAB6IP1 (via its RUN 1 domain). Interacts with TMF1. Interacts with CIMAP3. Interacts (GTP-bound) with APBA1/MINT1 isoform 3, also called Mint1_826, but not with isoform 1. Interacts with RIC1; the interaction is direct with a preference for RAB6A-GDP. Interacts with RGP1; the interaction is direct with a preference for RAB6A-GDP. As to quaternary structure, interacts (GTP-bound) with DYNLRB1; the interaction is direct. Interacts with BICD1. Interacts with BICD2; the interaction is direct. Interacts (GTP-bound) with VPS13B. Interacts with BICD1. Interacts (GDP-bound) with DYNLRB1; the interaction is direct. Interacts (GTP-bound) with VPS13B. It depends on Mg(2+) as a cofactor. Post-translationally, prenylated.

The protein localises to the golgi apparatus membrane. The protein resides in the cytoplasmic vesicle. Its subcellular location is the secretory vesicle. It localises to the acrosome membrane. It catalyses the reaction GTP + H2O = GDP + phosphate + H(+). Its activity is regulated as follows. Regulated by guanine nucleotide exchange factors (GEFs) which promote the exchange of bound GDP for free GTP. Regulated by GTPase activating proteins (GAPs) which increase the GTP hydrolysis activity. Inhibited by GDP dissociation inhibitors (GDIs). Its function is as follows. The small GTPases Rab are key regulators of intracellular membrane trafficking, from the formation of transport vesicles to their fusion with membranes. Rabs cycle between an inactive GDP-bound form and an active GTP-bound form that is able to recruit to membranes different sets of downstream effectors directly responsible for vesicle formation, movement, tethering and fusion. RAB6A acts as a regulator of COPI-independent retrograde transport from the Golgi apparatus towards the endoplasmic reticulum (ER). Has a low GTPase activity. Recruits VPS13B to the Golgi membrane. Plays a role in neuron projection development. This is Ras-related protein Rab-6A from Mus musculus (Mouse).